The following is a 241-amino-acid chain: Probable transcriptional regulatory protein CV_3123 (241 aa).

The protein belongs to the TACO1 family.

The protein resides in the cytoplasm. The polypeptide is Probable transcriptional regulatory protein CV_3123 (Chromobacterium violaceum (strain ATCC 12472 / DSM 30191 / JCM 1249 / CCUG 213 / NBRC 12614 / NCIMB 9131 / NCTC 9757 / MK)).